Reading from the N-terminus, the 953-residue chain is Protein translocase subunit SecA 1 (953 aa).

Residues Gln-83, Gly-101–Thr-105, and Asp-490 contribute to the ATP site. Low complexity predominate over residues Ala-854–Lys-867. Residues Ala-854–Gly-953 form a disordered region. Basic and acidic residues predominate over residues Ser-929–Ala-947.

It belongs to the SecA family. In terms of assembly, monomer and homodimer. Part of the essential Sec protein translocation apparatus which comprises SecA, SecYEG and auxiliary proteins SecDF. Other proteins may also be involved.

The protein resides in the cell membrane. The protein localises to the cytoplasm. The catalysed reaction is ATP + H2O + cellular proteinSide 1 = ADP + phosphate + cellular proteinSide 2.. Its function is as follows. Part of the Sec protein translocase complex. Interacts with the SecYEG preprotein conducting channel. Has a central role in coupling the hydrolysis of ATP to the transfer of proteins into and across the cell membrane, serving as an ATP-driven molecular motor driving the stepwise translocation of polypeptide chains across the membrane. This chain is Protein translocase subunit SecA 1, found in Mycolicibacterium smegmatis (strain ATCC 700084 / mc(2)155) (Mycobacterium smegmatis).